The primary structure comprises 176 residues: Small ribosomal subunit protein uS5 (176 aa).

One can recognise an S5 DRBM domain in the interval 11 to 74 (LSEVLVDVNR…QAAKKRMMKV (64 aa)).

This sequence belongs to the universal ribosomal protein uS5 family. Part of the 30S ribosomal subunit. Contacts proteins S4 and S8.

With S4 and S12 plays an important role in translational accuracy. Its function is as follows. Located at the back of the 30S subunit body where it stabilizes the conformation of the head with respect to the body. The chain is Small ribosomal subunit protein uS5 from Rickettsia conorii (strain ATCC VR-613 / Malish 7).